Here is a 319-residue protein sequence, read N- to C-terminus: Dehydrogenase/reductase SDR family member 9 (319 aa).

Residues 1-17 (MLFWVLGLLILCGFLWT) form the signal peptide. NAD(+)-binding positions include 34–58 (ITGC…HVIA) and Asp-83. A substrate-binding site is contributed by Ser-164. Catalysis depends on Tyr-176, which acts as the Proton acceptor. Lys-180 lines the NAD(+) pocket.

Belongs to the short-chain dehydrogenases/reductases (SDR) family. In terms of assembly, homotetramer. As to expression, highly expressed in trachea and epidermis. Detected at lower levels in spinal cord, bone marrow, brain, tongue, esophagus, heart, colon, testis, placenta, lung, skeletal muscle and lymph node.

It is found in the microsome membrane. It localises to the endoplasmic reticulum membrane. It carries out the reaction 3beta-hydroxy-5alpha-pregnane-20-one + NAD(+) = 5alpha-pregnane-3,20-dione + NADH + H(+). It catalyses the reaction 17beta-hydroxy-5alpha-androstan-3-one + NAD(+) = 5alpha-androstan-3,17-dione + NADH + H(+). The catalysed reaction is androsterone + NAD(+) = 5alpha-androstan-3,17-dione + NADH + H(+). The enzyme catalyses 5alpha-androstane-3alpha,17beta-diol + NAD(+) = 17beta-hydroxy-5alpha-androstan-3-one + NADH + H(+). It carries out the reaction all-trans-retinol + NAD(+) = all-trans-retinal + NADH + H(+). It catalyses the reaction 3alpha-hydroxy-5alpha-pregnan-20-one + NAD(+) = 5alpha-pregnane-3,20-dione + NADH + H(+). In terms of biological role, 3-alpha-hydroxysteroid dehydrogenase that converts 3-alpha-tetrahydroprogesterone (allopregnanolone) to dihydroxyprogesterone and 3-alpha-androstanediol to dihydroxyprogesterone. Also plays a role in the biosynthesis of retinoic acid from retinaldehyde. Can utilize both NADH and NADPH. This chain is Dehydrogenase/reductase SDR family member 9 (DHRS9), found in Homo sapiens (Human).